Consider the following 200-residue polypeptide: NADH-quinone oxidoreductase subunit B (200 aa).

Positions 78, 79, 144, and 174 each coordinate [4Fe-4S] cluster.

Belongs to the complex I 20 kDa subunit family. NDH-1 is composed of 14 different subunits. Subunits NuoB, C, D, E, F, and G constitute the peripheral sector of the complex. The cofactor is [4Fe-4S] cluster.

Its subcellular location is the cell membrane. The enzyme catalyses a quinone + NADH + 5 H(+)(in) = a quinol + NAD(+) + 4 H(+)(out). Its function is as follows. NDH-1 shuttles electrons from NADH, via FMN and iron-sulfur (Fe-S) centers, to quinones in the respiratory chain. The immediate electron acceptor for the enzyme in this species is believed to be ubiquinone. Couples the redox reaction to proton translocation (for every two electrons transferred, four hydrogen ions are translocated across the cytoplasmic membrane), and thus conserves the redox energy in a proton gradient. This chain is NADH-quinone oxidoreductase subunit B, found in Dehalococcoides mccartyi (strain CBDB1).